The chain runs to 510 residues: NAD(P)H-quinone oxidoreductase subunit 2 A, chloroplastic (510 aa).

The next 14 membrane-spanning stretches (helical) occupy residues 31–51, 59–79, 99–119, 124–144, 149–169, 184–204, 229–249, 261–281, 295–315, 323–343, 354–374, 395–415, 418–438, and 484–504; these read FIFP…IDLT, WFYF…LFRW, IFQF…VEYI, MAIT…MFLC, LITI…LSGY, LLMG…LYGL, ISIA…LAPF, PTPV…ALAT, WHLL…LLAI, MLAY…IVGD, YMLF…LFGL, ALSL…AGFF, LYLF…IGLL, and MTVC…ILAI.

This sequence belongs to the complex I subunit 2 family. NDH is composed of at least 16 different subunits, 5 of which are encoded in the nucleus.

It is found in the plastid. The protein localises to the chloroplast thylakoid membrane. It carries out the reaction a plastoquinone + NADH + (n+1) H(+)(in) = a plastoquinol + NAD(+) + n H(+)(out). It catalyses the reaction a plastoquinone + NADPH + (n+1) H(+)(in) = a plastoquinol + NADP(+) + n H(+)(out). NDH shuttles electrons from NAD(P)H:plastoquinone, via FMN and iron-sulfur (Fe-S) centers, to quinones in the photosynthetic chain and possibly in a chloroplast respiratory chain. The immediate electron acceptor for the enzyme in this species is believed to be plastoquinone. Couples the redox reaction to proton translocation, and thus conserves the redox energy in a proton gradient. This Saccharum hybrid (Sugarcane) protein is NAD(P)H-quinone oxidoreductase subunit 2 A, chloroplastic.